We begin with the raw amino-acid sequence, 203 residues long: ATP-dependent Clp protease proteolytic subunit (203 aa).

Ser-107 (nucleophile) is an active-site residue. The active site involves His-132.

The protein belongs to the peptidase S14 family. In terms of assembly, fourteen ClpP subunits assemble into 2 heptameric rings which stack back to back to give a disk-like structure with a central cavity, resembling the structure of eukaryotic proteasomes.

It is found in the cytoplasm. It catalyses the reaction Hydrolysis of proteins to small peptides in the presence of ATP and magnesium. alpha-casein is the usual test substrate. In the absence of ATP, only oligopeptides shorter than five residues are hydrolyzed (such as succinyl-Leu-Tyr-|-NHMec, and Leu-Tyr-Leu-|-Tyr-Trp, in which cleavage of the -Tyr-|-Leu- and -Tyr-|-Trp bonds also occurs).. Its function is as follows. Cleaves peptides in various proteins in a process that requires ATP hydrolysis. Has a chymotrypsin-like activity. Plays a major role in the degradation of misfolded proteins. The protein is ATP-dependent Clp protease proteolytic subunit of Shewanella denitrificans (strain OS217 / ATCC BAA-1090 / DSM 15013).